A 63-amino-acid chain; its full sequence is Large ribosomal subunit protein bL28 (63 aa).

The protein belongs to the bacterial ribosomal protein bL28 family.

The protein is Large ribosomal subunit protein bL28 of Geotalea uraniireducens (strain Rf4) (Geobacter uraniireducens).